Consider the following 239-residue polypeptide: Protein NtpR (239 aa).

Positions 12-239 (LIRATDTFQG…GLFDFFVQEF (228 aa)) constitute a Glutamine amidotransferase type-1 domain. C113 (nucleophile) is an active-site residue. Active-site residues include H217 and E219.

The protein is Protein NtpR (ntpR) of Enterococcus hirae (strain ATCC 9790 / DSM 20160 / JCM 8729 / LMG 6399 / NBRC 3181 / NCIMB 6459 / NCDO 1258 / NCTC 12367 / WDCM 00089 / R).